Reading from the N-terminus, the 435-residue chain is 3-phosphoshikimate 1-carboxyvinyltransferase (435 aa).

Lys21, Ser22, and Arg26 together coordinate 3-phosphoshikimate. Lys21 is a binding site for phosphoenolpyruvate. Phosphoenolpyruvate is bound by residues Gly98 and Arg126. 6 residues coordinate 3-phosphoshikimate: Ser169, Ser170, Gln171, Ser197, Asp312, and Lys339. Gln171 provides a ligand contact to phosphoenolpyruvate. Asp312 acts as the Proton acceptor in catalysis. Phosphoenolpyruvate contacts are provided by Arg343, Arg386, and Lys412.

Belongs to the EPSP synthase family. Monomer.

The protein resides in the cytoplasm. The catalysed reaction is 3-phosphoshikimate + phosphoenolpyruvate = 5-O-(1-carboxyvinyl)-3-phosphoshikimate + phosphate. It functions in the pathway metabolic intermediate biosynthesis; chorismate biosynthesis; chorismate from D-erythrose 4-phosphate and phosphoenolpyruvate: step 6/7. Catalyzes the transfer of the enolpyruvyl moiety of phosphoenolpyruvate (PEP) to the 5-hydroxyl of shikimate-3-phosphate (S3P) to produce enolpyruvyl shikimate-3-phosphate and inorganic phosphate. This is 3-phosphoshikimate 1-carboxyvinyltransferase from Clostridium beijerinckii (strain ATCC 51743 / NCIMB 8052) (Clostridium acetobutylicum).